The primary structure comprises 640 residues: Chaperone protein HtpG (640 aa).

The a; substrate-binding stretch occupies residues 1–348 (MADVAHQETH…SNDLPLNVSR (348 aa)). Positions 349–565 (EILQDNKITQ…GTGMSTQMIK (217 aa)) are b. Residues 566–640 (LMQAAGQPVP…LNTLLMNLAK (75 aa)) are c.

This sequence belongs to the heat shock protein 90 family. As to quaternary structure, homodimer.

The protein resides in the cytoplasm. Molecular chaperone. Has ATPase activity. The sequence is that of Chaperone protein HtpG from Pseudoalteromonas atlantica (strain T6c / ATCC BAA-1087).